Here is a 504-residue protein sequence, read N- to C-terminus: Sperm motility kinase 2A (504 aa).

Positions 28–276 (YEMLGTIGHG…VAEVMMHPWV (249 aa)) constitute a Protein kinase domain. Residues 34 to 42 (IGHGGSTKV) and Lys-57 each bind ATP. Asp-147 functions as the Proton acceptor in the catalytic mechanism. One can recognise a UBA domain in the interval 294–334 (KPDPAIVKAMGHIGFQAQDIEDSLRQRKFNETMASYCLLKK). 2 stretches are compositionally biased toward polar residues: residues 376 to 393 (PTSLRLSANRQMSVCGRS) and 443 to 454 (SDESTEGHTSAS). Disordered regions lie at residues 376-403 (PTSLRLSANRQMSVCGRSTSKKRDRSFS) and 443-469 (SDESTEGHTSASAEDKPVRSRGWPRGI).

This sequence belongs to the protein kinase superfamily. CAMK Ser/Thr protein kinase family. Smok subfamily. As to expression, testis-specific. Expressed in the testis from 22 days postpartum (22 dpp).

The enzyme catalyses L-seryl-[protein] + ATP = O-phospho-L-seryl-[protein] + ADP + H(+). It carries out the reaction L-threonyl-[protein] + ATP = O-phospho-L-threonyl-[protein] + ADP + H(+). Its function is as follows. May play a role in sperm motility, especially in the regulation of flagellar function. This chain is Sperm motility kinase 2A (Smok2a), found in Mus musculus (Mouse).